A 549-amino-acid polypeptide reads, in one-letter code: MLSDIEITHQTKLEHISKVAAKLGLNEDELELYGKFKAKISPRLEPSNSKLILVTATNPTPYGEGKTTMSIGLADALNSLNKKVCLALREPSLGPVFGIKGGAAGGGYSQLAPMEDLNLHFTGDFHAITSANNLISAMIDNSLYQENPLKIEKILWKRCMDMNDRALRFITVGQGGRTDGVPREDGFNITAASEIMAVLCLATSLSDLKERVANIMVAYDSDKKPIYVRDLGCEDAVCILLKDAIKPNLFQTLEHTPTLVHGGPFANIAHGCNSVIATKTALNLADYVITEAGFGSELGAEKFLDIKCRVAEIKPSAVVLVSTIRSLKYNGEANKDEITKPDMNALKKGIENLGGHIENLKGKFGQNVVVALNKFGFDTDEEINFVKEYCQKLGIEVAVCENFLKGGKGALELAELVLKACDKPSKINFTYEMSDDTKTKIEKVAKEIYGAGEVVFEEAALKKLEMIKELNLSHLPVCIAKTQYSFSDDAKLLGRAKGFTFSVKDLDIRTGAGFIVAVCGKIMLMPGLPKVPAAVNMKIDAEGKIDGLS.

ATP is bound at residue 60-67 (TPYGEGKT).

It belongs to the formate--tetrahydrofolate ligase family.

It catalyses the reaction (6S)-5,6,7,8-tetrahydrofolate + formate + ATP = (6R)-10-formyltetrahydrofolate + ADP + phosphate. The protein operates within one-carbon metabolism; tetrahydrofolate interconversion. The sequence is that of Formate--tetrahydrofolate ligase from Campylobacter concisus (strain 13826).